Consider the following 162-residue polypeptide: SsrA-binding protein (162 aa).

A compositionally biased stretch (basic and acidic residues) spans 137 to 154 (HDKREDTKAREWDREKAR). The interval 137–162 (HDKREDTKAREWDREKARIMKNKHRG) is disordered.

The protein belongs to the SmpB family.

It is found in the cytoplasm. Its function is as follows. Required for rescue of stalled ribosomes mediated by trans-translation. Binds to transfer-messenger RNA (tmRNA), required for stable association of tmRNA with ribosomes. tmRNA and SmpB together mimic tRNA shape, replacing the anticodon stem-loop with SmpB. tmRNA is encoded by the ssrA gene; the 2 termini fold to resemble tRNA(Ala) and it encodes a 'tag peptide', a short internal open reading frame. During trans-translation Ala-aminoacylated tmRNA acts like a tRNA, entering the A-site of stalled ribosomes, displacing the stalled mRNA. The ribosome then switches to translate the ORF on the tmRNA; the nascent peptide is terminated with the 'tag peptide' encoded by the tmRNA and targeted for degradation. The ribosome is freed to recommence translation, which seems to be the essential function of trans-translation. The polypeptide is SsrA-binding protein (Aeromonas hydrophila subsp. hydrophila (strain ATCC 7966 / DSM 30187 / BCRC 13018 / CCUG 14551 / JCM 1027 / KCTC 2358 / NCIMB 9240 / NCTC 8049)).